The chain runs to 1036 residues: MMKFRFRRQGADPQREKLKQELFAFHKTVEHGFPNQPSALAFDPELRIMAIGTRSGAVKIYGAPGVEFTGLHRDAATVTQMHFLPGQGRLLTLLDDSSLHLWEIIQRNGCAHLEEGLSFHPPSRPSFDNASFPAGLTRVTVVLLAAGDTVVLGTESGSIFFLDVATLALLEGQTLSPDEVLRSVPDDYRCGKALGPVESLQGHLQDPSKILIGYSRGLLVIWSQATQSVEHVFLGNQQLESLCWGRGGSNIISSHSDGSYAIWSTDTGSPPTLQPTVVTTPYGPFPCKAINKILWRSCESGDHFIIFSGGMPRASYGDRHCVCVLRAETLVTLDFTSRVIDFFTVHSTQPEDECDNPQALAVLLEEELVVLDLQTPGWPAVPAPYLAPLHSSAITCSAHVANVPSKLWARIVSAGEQQSPQPASSALSWPITGGRNLAQEPSQRGLLLTGHEDGTVRFWDASGVALRPLYKLSTAGLFQTDCEHADSLAQAVEDDWPPFRKVGCFDPYSDDPRLGIQKVALCKYTAQMVVAGTAGQVLVLELSEVPAEHAVSVANVDLLQDREGFTWKGHERLNPHTGLLPWPAGFQPRMLIQCLPPAAVTAVTLHAEWSLVAFGTSHGFGLFDYQRKSPVLARCTLHPNDSLAMEGPLSRVKSLKKSLRQSFRRIRKSRVSGKKRTPAASSKLQEANAQLAEQTCPHDLEMTPVQRRIEPRSADDSLSGVVRCLYFADTFLRDATHHGPTMWAGTNSGSVFAYALEVPAATAGGEKRPEQAVEAVLGKEVQLMHRAPVVAIAVLDGRGRPLPEPYEASRDLAQAPDMQGGHAVLIASEEQFKVFTLPKVSAKTKFKLTAHEGCRVRKVALATFASVMSEDYAETCLACLTNLGDVHVFAVPGLRPQVHYSCIRKEDISGIASCVFTRHGQGFYLISPSEFERFSLSARNITEPLCSLDISWPQNATQPRLQESPKLSQANGTRDIILAPESCEGSPSSAHSKRADTMEPPEAALSPVSIDSAASGDTMLDTTGDVTVEYVKDFLG.

10 WD repeats span residues Ser-38 to Leu-71, Val-78 to Phe-119, Val-139 to Leu-175, Ser-199 to Phe-233, Leu-239 to Pro-271, Ala-289 to Val-331, Val-339 to Leu-373, Thr-395 to Ser-473, Gln-517 to Ile-592, and Thr-601 to Ser-662. Ser-662 is subject to Phosphoserine. The segment covering Arg-667 to Thr-677 has biased composition (basic residues). The segment at Arg-667–Asn-688 is disordered. Residues Ala-679–Asn-688 show a composition bias toward polar residues. 4 WD repeats span residues Val-722 to Gln-782, Ala-791 to Lys-843, Leu-848 to Ser-901, and Val-915 to Ala-938. At Thr-957 the chain carries Phosphothreonine. Residues Ser-964, Ser-982, and Ser-989 each carry the phosphoserine modification. The segment at Pro-980–Glu-1002 is disordered.

It belongs to the WD repeat L(2)GL family. As to quaternary structure, associated with nonmuscle myosin II heavy chain. Interacts with PRKCI/aPKC, PARD6B/Par-6 and PARD6A. Interacts with STX4A. Interacts with RAB10 (GDP-bound form); the interaction is direct and promotes RAB10 association with membranes and activation through competition with the Rab inhibitor GDI1. Interacts with DCAF1. Post-translationally, phosphorylated by PRKCI. Widely expressed. Expressed in brain, ovary, testis, with moderate expression in lever, uterus, lung and kidney.

The protein localises to the early endosome membrane. The protein resides in the golgi apparatus. Its subcellular location is the trans-Golgi network membrane. It localises to the cell projection. It is found in the axon. The protein localises to the golgi apparatus membrane. The protein resides in the cytoplasm. Its subcellular location is the cytoskeleton. In terms of biological role, cortical cytoskeleton protein found in a complex involved in maintaining cell polarity and epithelial integrity. Involved in the regulation of mitotic spindle orientation, proliferation, differentiation and tissue organization of neuroepithelial cells. Involved in axonogenesis through RAB10 activation thereby regulating vesicular membrane trafficking toward the axonal plasma membrane. The chain is Lethal(2) giant larvae protein homolog 1 (LLGL1) from Bos taurus (Bovine).